The chain runs to 475 residues: 3-isopropylmalate dehydratase large subunit 1 (475 aa).

3 residues coordinate [4Fe-4S] cluster: cysteine 353, cysteine 413, and cysteine 416.

It belongs to the aconitase/IPM isomerase family. LeuC type 1 subfamily. Heterodimer of LeuC and LeuD. The cofactor is [4Fe-4S] cluster.

The enzyme catalyses (2R,3S)-3-isopropylmalate = (2S)-2-isopropylmalate. Its pathway is amino-acid biosynthesis; L-leucine biosynthesis; L-leucine from 3-methyl-2-oxobutanoate: step 2/4. In terms of biological role, catalyzes the isomerization between 2-isopropylmalate and 3-isopropylmalate, via the formation of 2-isopropylmaleate. In Mannheimia succiniciproducens (strain KCTC 0769BP / MBEL55E), this protein is 3-isopropylmalate dehydratase large subunit 1.